The following is a 112-amino-acid chain: Protein lin-52 homolog (112 aa).

Belongs to the lin-52 family. In terms of assembly, component of the DREAM complex. In terms of tissue distribution, expressed in the brain, liver and retina. Highly expressed in the retinal ganglion cell and inner nuclear layers at the parr stage. Expressed at a lower level in inner segments of some retinal photoreceptors.

Its function is as follows. May be involved in retinal development. In Oncorhynchus mykiss (Rainbow trout), this protein is Protein lin-52 homolog (lin52).